The primary structure comprises 602 residues: Pentatricopeptide repeat-containing protein At3g04760, chloroplastic (602 aa).

The transit peptide at 1-78 (MTPLSSELVG…TDATLPTERR (78 aa)) directs the protein to the chloroplast. Positions 42–64 (FSNSNPNNDNGRSFSSSGARNLQ) are enriched in polar residues. Residues 42 to 85 (FSNSNPNNDNGRSFSSSGARNLQTTTTTDATLPTERRQQHSQSL) form a disordered region. The segment covering 65 to 74 (TTTTTDATLP) has biased composition (low complexity). PPR repeat units lie at residues 88–122 (RDTQ…GYNP), 123–153 (DVIL…LEKF), 157–191 (DVFA…DFSP), 192–226 (DTVT…NCQP), 227–261 (TVIT…GLKP), 262–296 (DMFT…GCEP), 297–331 (DVIS…KCDP), 332–366 (NVVT…GLTP), 367–401 (DAYS…GCLP), 402–436 (DIVN…GCSP), 437–471 (NSSS…GIDP), 472–506 (DEIT…EFHP), 507–541 (SVVT…GCRP), and 542–576 (NETT…DAIS).

The protein belongs to the PPR family. P subfamily.

It localises to the plastid. Its subcellular location is the chloroplast. The chain is Pentatricopeptide repeat-containing protein At3g04760, chloroplastic from Arabidopsis thaliana (Mouse-ear cress).